The primary structure comprises 411 residues: Peptidase T (411 aa).

Position 79 (H79) interacts with Zn(2+). The active site involves D81. D142 contributes to the Zn(2+) binding site. Residue E176 is the Proton acceptor of the active site. The Zn(2+) site is built by E177, D199, and H381.

Belongs to the peptidase M20B family. The cofactor is Zn(2+).

It is found in the cytoplasm. It catalyses the reaction Release of the N-terminal residue from a tripeptide.. In terms of biological role, cleaves the N-terminal amino acid of tripeptides. The polypeptide is Peptidase T (Geobacillus thermodenitrificans (strain NG80-2)).